Reading from the N-terminus, the 251-residue chain is Auxin-responsive protein IAA29 (251 aa).

Residues 3 to 7 (LDLGL) carry the EAR-like (transcriptional repression) motif. One can recognise a PB1 domain in the interval 159 to 246 (SMYVKVKMDG…SIIRDRPCAY (88 aa)).

Belongs to the Aux/IAA family. As to quaternary structure, homodimers and heterodimers.

It localises to the nucleus. Aux/IAA proteins are short-lived transcriptional factors that function as repressors of early auxin response genes at low auxin concentrations. Repression is thought to result from the interaction with auxin response factors (ARFs), proteins that bind to the auxin-responsive promoter element (AuxRE). Formation of heterodimers with ARF proteins may alter their ability to modulate early auxin response genes expression. The polypeptide is Auxin-responsive protein IAA29 (IAA29) (Arabidopsis thaliana (Mouse-ear cress)).